The chain runs to 242 residues: Ribosomal RNA small subunit methyltransferase G (242 aa).

S-adenosyl-L-methionine is bound by residues glycine 78, phenylalanine 83, 129-130 (AE), and arginine 148. The segment at 221–242 (TKKRYPRKAGVPEKSPIGGKHD) is disordered.

This sequence belongs to the methyltransferase superfamily. RNA methyltransferase RsmG family.

It is found in the cytoplasm. In terms of biological role, specifically methylates the N7 position of a guanine in 16S rRNA. This chain is Ribosomal RNA small subunit methyltransferase G, found in Oenococcus oeni (strain ATCC BAA-331 / PSU-1).